The chain runs to 136 residues: Protein NrdI (136 aa).

This sequence belongs to the NrdI family.

In terms of biological role, probably involved in ribonucleotide reductase function. This Escherichia coli (strain 55989 / EAEC) protein is Protein NrdI.